The primary structure comprises 237 residues: Purine nucleoside phosphorylase DeoD-type (237 aa).

His-4 contacts a purine D-ribonucleoside. Phosphate contacts are provided by residues Gly-20, Arg-24, Arg-43, and 87-90 (RVGS). Residues 179-181 (EME) and 203-204 (SD) each bind a purine D-ribonucleoside. Asp-204 serves as the catalytic Proton donor.

It belongs to the PNP/UDP phosphorylase family. In terms of assembly, homohexamer; trimer of homodimers.

The enzyme catalyses a purine D-ribonucleoside + phosphate = a purine nucleobase + alpha-D-ribose 1-phosphate. The catalysed reaction is a purine 2'-deoxy-D-ribonucleoside + phosphate = a purine nucleobase + 2-deoxy-alpha-D-ribose 1-phosphate. Its function is as follows. Catalyzes the reversible phosphorolytic breakdown of the N-glycosidic bond in the beta-(deoxy)ribonucleoside molecules, with the formation of the corresponding free purine bases and pentose-1-phosphate. In Dichelobacter nodosus (strain VCS1703A), this protein is Purine nucleoside phosphorylase DeoD-type.